A 247-amino-acid polypeptide reads, in one-letter code: Anionic trypsin (247 aa).

The signal sequence occupies residues 1–15; sequence MNPLLILAFLGAAVA. Residues 16–23 constitute a propeptide, activation peptide; it reads TPTDDDDK. A Peptidase S1 domain is found at 24–244; the sequence is IVGGYTCEEN…FVDWIQSTIA (221 aa). Intrachain disulfides connect cysteine 30/cysteine 160, cysteine 48/cysteine 64, cysteine 132/cysteine 233, cysteine 139/cysteine 206, cysteine 171/cysteine 185, and cysteine 196/cysteine 220. The active-site Charge relay system is the histidine 63. The Ca(2+) site is built by glutamate 75, asparagine 77, valine 80, and glutamate 85. Aspartate 107 acts as the Charge relay system in catalysis. Serine 200 (charge relay system) is an active-site residue.

It belongs to the peptidase S1 family. The cofactor is Ca(2+).

The protein resides in the secreted. The protein localises to the extracellular space. It catalyses the reaction Preferential cleavage: Arg-|-Xaa, Lys-|-Xaa.. The polypeptide is Anionic trypsin (Canis lupus familiaris (Dog)).